Consider the following 1183-residue polypeptide: RecQ-like DNA helicase BLM (1183 aa).

A disordered region spans residues 1 to 109 (MEEARAATNG…AAEQDSSAEH (109 aa)). The span at 14–27 (ESQKLSNGEKSSQL) shows a compositional bias: polar residues. Residues 38–48 (ADIELEEDDYL) are compositionally biased toward acidic residues. A necessary for dimerization and homooligomerization region spans residues 110-162 (ADKGLHLEQQLYSVMEDICKLVDAIPLHELTSISCAKELLQQRELRRKLLADS). Disordered regions lie at residues 164 to 215 (ALNT…LPSV), 260 to 323 (PKVN…GCWD), and 381 to 408 (GSAP…PLVH). Composition is skewed to polar residues over residues 206 to 215 (TPKSTNLPSV) and 265 to 280 (KGST…SFNG). ATP contacts are provided by residues 439–443 (FRTNQ) and 463–467 (GGGKS). The Helicase ATP-binding domain occupies 447 to 622 (INAALLGEDC…QNQLEMLKPQ (176 aa)). A DEAH box motif is present at residues 566-569 (DEAH). 3' overhang DNA-binding stretches follow at residues 641–644 (KPKK) and 668–670 (SRH). Positions 648–795 (DCLEWIKKYH…TRQTHFNNLY (148 aa)) constitute a Helicase C-terminal domain. Arg753 lines the ATP pocket. Positions 771–774 (RLRR) are 3' overhang DNA-binding. Positions 807, 826, 834, and 837 each coordinate Zn(2+). The interval 865 to 910 (QVGGINGNRNTGSGRYTLNMMVDIFLGAKSAKIQSGIFGKGAAYSR) is DNA Holliday junction binding. 3 3' overhang DNA-binding regions span residues 881–883 (TLN), 892–896 (AKSAK), and 931–937 (YITANDQ). One can recognise an HRDC domain in the interval 983–1063 (EEMVKKCLGE…DKYSEWTTPE (81 aa)). The tract at residues 998 to 1015 (KTLGKIFDVHYFNIFSTS) is necessary for ssDNA and DNA Holliday junction binding. Residues 1068–1183 (QSVDTAPGSA…HFLQPSYAVL (116 aa)) form a disordered region. The segment covering 1091–1101 (VTSSYFGGNAN) has biased composition (polar residues). A Nuclear localization signal motif is present at residues 1104-1120 (RKRKRLPNSGESKRKKT). Positions 1133–1142 (ARYRRARRAP) are enriched in basic residues. Over residues 1143–1158 (GSRAAAPAQSSALRGA) the composition is skewed to low complexity.

The protein belongs to the helicase family. RecQ subfamily. As to quaternary structure, monomer. Homodimer (via N-terminus). Homotetramer (via N-terminus); dimer of dimers. Homohexamer (via N-terminus). Self-association negatively regulates DNA unwinding amplitude and rate. Oligomer complexes dissociate into monomer in presence of ATP. Zn(2+) is required as a cofactor.

Its subcellular location is the nucleus. The enzyme catalyses Couples ATP hydrolysis with the unwinding of duplex DNA by translocating in the 3'-5' direction.. It catalyses the reaction ATP + H2O = ADP + phosphate + H(+). In terms of biological role, ATP-dependent DNA helicase that unwinds single- and double-stranded DNA in a 3'-5' direction. Participates in DNA replication and repair. Involved in 5'-end resection of DNA during double-strand break (DSB) repair. Negatively regulates sister chromatid exchange (SCE). Stimulates DNA 4-way junction branch migration and DNA Holliday junction dissolution. Binds DNA. Binds single-stranded DNA (ssDNA), forked duplex DNA and DNA Holliday junction. The protein is RecQ-like DNA helicase BLM (BLM) of Gallus gallus (Chicken).